Reading from the N-terminus, the 397-residue chain is Mannonate dehydratase 2 (397 aa).

Belongs to the mannonate dehydratase family. The cofactor is Fe(2+). Requires Mn(2+) as cofactor.

It carries out the reaction D-mannonate = 2-dehydro-3-deoxy-D-gluconate + H2O. Its pathway is carbohydrate metabolism; pentose and glucuronate interconversion. Its function is as follows. Catalyzes the dehydration of D-mannonate. This is Mannonate dehydratase 2 (uxuA2) from Agrobacterium fabrum (strain C58 / ATCC 33970) (Agrobacterium tumefaciens (strain C58)).